A 345-amino-acid polypeptide reads, in one-letter code: Phosphate import ATP-binding protein PstB 2 (345 aa).

Residues 1 to 57 (MSDTPQSEPRRSDDRSGADDATAAAAGSTDAAAAAVSSKTGGIAGPPGGPGEVDGDE) are disordered. Positions 8–18 (EPRRSDDRSGA) are enriched in basic and acidic residues. A compositionally biased stretch (low complexity) spans 19-35 (DDATAAAAGSTDAAAAA). A compositionally biased stretch (gly residues) spans 42-52 (GIAGPPGGPGE). The ABC transporter domain maps to 86–340 (VSVSDLDTYY…PQSQRVEDYV (255 aa)). Position 118 to 125 (118 to 125 (GPSGCGKS)) interacts with ATP.

The protein belongs to the ABC transporter superfamily. Phosphate importer (TC 3.A.1.7) family. In terms of assembly, the complex is composed of two ATP-binding proteins (PstB), two transmembrane proteins (PstC and PstA) and a solute-binding protein (PstS).

Its subcellular location is the cell membrane. The enzyme catalyses phosphate(out) + ATP + H2O = ADP + 2 phosphate(in) + H(+). Its function is as follows. Part of the ABC transporter complex PstSACB involved in phosphate import. Responsible for energy coupling to the transport system. The chain is Phosphate import ATP-binding protein PstB 2 from Halobacterium salinarum (strain ATCC 700922 / JCM 11081 / NRC-1) (Halobacterium halobium).